Reading from the N-terminus, the 270-residue chain is 3-methyl-2-oxobutanoate hydroxymethyltransferase (270 aa).

The Mg(2+) site is built by Asp50 and Asp89. Residues 50 to 51, Asp89, and Lys118 each bind 3-methyl-2-oxobutanoate; that span reads DS. Glu120 lines the Mg(2+) pocket. Catalysis depends on Glu187, which acts as the Proton acceptor.

The protein belongs to the PanB family. As to quaternary structure, homodecamer; pentamer of dimers. It depends on Mg(2+) as a cofactor.

The protein resides in the cytoplasm. The catalysed reaction is 3-methyl-2-oxobutanoate + (6R)-5,10-methylene-5,6,7,8-tetrahydrofolate + H2O = 2-dehydropantoate + (6S)-5,6,7,8-tetrahydrofolate. Its pathway is cofactor biosynthesis; (R)-pantothenate biosynthesis; (R)-pantoate from 3-methyl-2-oxobutanoate: step 1/2. Catalyzes the reversible reaction in which hydroxymethyl group from 5,10-methylenetetrahydrofolate is transferred onto alpha-ketoisovalerate to form ketopantoate. The polypeptide is 3-methyl-2-oxobutanoate hydroxymethyltransferase (Helicobacter pylori (strain P12)).